A 492-amino-acid chain; its full sequence is Probable cobyric acid synthase (492 aa).

Residues proline 248–alanine 434 enclose the GATase cobBQ-type domain. The active-site Nucleophile is cysteine 327. Histidine 426 is a catalytic residue.

Belongs to the CobB/CobQ family. CobQ subfamily.

It functions in the pathway cofactor biosynthesis; adenosylcobalamin biosynthesis. Catalyzes amidations at positions B, D, E, and G on adenosylcobyrinic A,C-diamide. NH(2) groups are provided by glutamine, and one molecule of ATP is hydrogenolyzed for each amidation. The chain is Probable cobyric acid synthase from Methanoculleus marisnigri (strain ATCC 35101 / DSM 1498 / JR1).